Here is a 340-residue protein sequence, read N- to C-terminus: GTP 3',8-cyclase (340 aa).

One can recognise a Radical SAM core domain in the interval 8–227 (KLGRPIRDLR…TMIEQHFEID (220 aa)). Position 17 (Arg17) interacts with GTP. [4Fe-4S] cluster is bound by residues Cys24 and Cys28. Tyr30 contributes to the S-adenosyl-L-methionine binding site. Cys31 provides a ligand contact to [4Fe-4S] cluster. Arg71 is a GTP binding site. S-adenosyl-L-methionine is bound at residue Gly75. Thr102 is a GTP binding site. S-adenosyl-L-methionine is bound at residue Ser126. Lys163 contacts GTP. An S-adenosyl-L-methionine-binding site is contributed by Met197. [4Fe-4S] cluster contacts are provided by Cys261 and Cys264. GTP is bound at residue 266-268 (RAR). Cys278 provides a ligand contact to [4Fe-4S] cluster.

The protein belongs to the radical SAM superfamily. MoaA family. As to quaternary structure, monomer and homodimer. The cofactor is [4Fe-4S] cluster.

It carries out the reaction GTP + AH2 + S-adenosyl-L-methionine = (8S)-3',8-cyclo-7,8-dihydroguanosine 5'-triphosphate + 5'-deoxyadenosine + L-methionine + A + H(+). It participates in cofactor biosynthesis; molybdopterin biosynthesis. Its function is as follows. Catalyzes the cyclization of GTP to (8S)-3',8-cyclo-7,8-dihydroguanosine 5'-triphosphate. The polypeptide is GTP 3',8-cyclase (Staphylococcus aureus (strain MRSA252)).